The primary structure comprises 164 residues: MRVILKEDFINLGKEGDTVDVKDGFARNYLLPKGFAVFSNKHNIDIFNQKRRAILKRQETRKKIALELKAKLDKVSLEFVMQSNDGGKLFHSINSLNIADELLKLGFEIERRKIDIHYGTLKTFGIYDVTIKLYEGINAVIKVEIKREEKKKSLKKSKSVAKEV.

The protein belongs to the bacterial ribosomal protein bL9 family.

Binds to the 23S rRNA. The protein is Large ribosomal subunit protein bL9 of Borrelia hermsii (strain HS1 / DAH).